The sequence spans 138 residues: Basic phospholipase A2 homolog ammodytin L (138 aa).

Positions 1 to 16 are cleaved as a signal peptide; that stretch reads MRILWIVAVCLIGVEG. Disulfide bonds link Cys42-Cys131, Cys44-Cys60, Cys59-Cys111, Cys65-Cys138, Cys66-Cys104, Cys73-Cys97, and Cys91-Cys102. An important for membrane-damaging activities in eukaryotes and bacteria; heparin-binding region spans residues 121-133; the sequence is KKYKVYLRFKCKG.

The protein belongs to the phospholipase A2 family. Group II subfamily. S49 sub-subfamily. Expressed by the venom gland.

The protein resides in the secreted. In terms of biological role, snake venom phospholipase A2 homolog that lacks enzymatic activity. Is very active in inducing myonecrosis in vivo and shows a potent calcium-independent membrane-damaging activity in vitro, most probably by binding and incorporating in the membrane. Also acts as a presynaptic neurotoxin. A model of myotoxic mechanism has been proposed: an apo Lys49-PLA2 is activated by the entrance of a hydrophobic molecule (e.g. fatty acid) at the hydrophobic channel of the protein leading to a reorientation of a monomer. This reorientation causes a transition between 'inactive' to 'active' states, causing alignment of C-terminal and membrane-docking sites (MDoS) side-by-side and putting the membrane-disruption sites (MDiS) in the same plane, exposed to solvent and in a symmetric position for both monomers. The MDoS region stabilizes the toxin on membrane by the interaction of charged residues with phospholipid head groups. Subsequently, the MDiS region destabilizes the membrane with penetration of hydrophobic residues. This insertion causes a disorganization of the membrane, allowing an uncontrolled influx of ions (i.e. calcium and sodium), and eventually triggering irreversible intracellular alterations and cell death. The chain is Basic phospholipase A2 homolog ammodytin L from Vipera ammodytes ammodytes (Western sand viper).